The chain runs to 259 residues: Imidazole glycerol phosphate synthase subunit HisF (259 aa).

Residues Asp11 and Asp130 contribute to the active site.

It belongs to the HisA/HisF family. As to quaternary structure, heterodimer of HisH and HisF.

It localises to the cytoplasm. The catalysed reaction is 5-[(5-phospho-1-deoxy-D-ribulos-1-ylimino)methylamino]-1-(5-phospho-beta-D-ribosyl)imidazole-4-carboxamide + L-glutamine = D-erythro-1-(imidazol-4-yl)glycerol 3-phosphate + 5-amino-1-(5-phospho-beta-D-ribosyl)imidazole-4-carboxamide + L-glutamate + H(+). The protein operates within amino-acid biosynthesis; L-histidine biosynthesis; L-histidine from 5-phospho-alpha-D-ribose 1-diphosphate: step 5/9. Its function is as follows. IGPS catalyzes the conversion of PRFAR and glutamine to IGP, AICAR and glutamate. The HisF subunit catalyzes the cyclization activity that produces IGP and AICAR from PRFAR using the ammonia provided by the HisH subunit. The protein is Imidazole glycerol phosphate synthase subunit HisF of Lactococcus lactis subsp. cremoris (strain MG1363).